Here is a 249-residue protein sequence, read N- to C-terminus: Probable transcriptional regulatory protein Meso_3192 (249 aa).

It belongs to the TACO1 family.

It is found in the cytoplasm. In Chelativorans sp. (strain BNC1), this protein is Probable transcriptional regulatory protein Meso_3192.